We begin with the raw amino-acid sequence, 170 residues long: Peptide methionine sulfoxide reductase MsrA (170 aa).

Residue Cys-13 is part of the active site.

The protein belongs to the MsrA Met sulfoxide reductase family.

The enzyme catalyses L-methionyl-[protein] + [thioredoxin]-disulfide + H2O = L-methionyl-(S)-S-oxide-[protein] + [thioredoxin]-dithiol. It catalyses the reaction [thioredoxin]-disulfide + L-methionine + H2O = L-methionine (S)-S-oxide + [thioredoxin]-dithiol. Its function is as follows. Has an important function as a repair enzyme for proteins that have been inactivated by oxidation. Catalyzes the reversible oxidation-reduction of methionine sulfoxide in proteins to methionine. The polypeptide is Peptide methionine sulfoxide reductase MsrA (Nocardia farcinica (strain IFM 10152)).